A 379-amino-acid polypeptide reads, in one-letter code: Alanine racemase (379 aa).

Residue Lys-37 is the Proton acceptor; specific for D-alanine of the active site. Position 37 is an N6-(pyridoxal phosphate)lysine (Lys-37). Substrate is bound at residue Arg-137. The active-site Proton acceptor; specific for L-alanine is Tyr-269. Residue Met-317 participates in substrate binding.

The protein belongs to the alanine racemase family. Requires pyridoxal 5'-phosphate as cofactor.

The catalysed reaction is L-alanine = D-alanine. Its pathway is amino-acid biosynthesis; D-alanine biosynthesis; D-alanine from L-alanine: step 1/1. Functionally, catalyzes the interconversion of L-alanine and D-alanine. May also act on other amino acids. In Geobacter sp. (strain M21), this protein is Alanine racemase (alr).